We begin with the raw amino-acid sequence, 129 residues long: Small ribosomal subunit protein uS11 (129 aa).

It belongs to the universal ribosomal protein uS11 family. Part of the 30S ribosomal subunit. Interacts with proteins S7 and S18. Binds to IF-3.

Functionally, located on the platform of the 30S subunit, it bridges several disparate RNA helices of the 16S rRNA. Forms part of the Shine-Dalgarno cleft in the 70S ribosome. The polypeptide is Small ribosomal subunit protein uS11 (Buchnera aphidicola subsp. Baizongia pistaciae (strain Bp)).